The chain runs to 168 residues: Cyclic pyranopterin monophosphate synthase (168 aa).

Substrate-binding positions include 83 to 85 and 121 to 122; these read LCH and ME. The active site involves D136.

It belongs to the MoaC family. In terms of assembly, homohexamer; trimer of dimers.

It carries out the reaction (8S)-3',8-cyclo-7,8-dihydroguanosine 5'-triphosphate = cyclic pyranopterin phosphate + diphosphate. It functions in the pathway cofactor biosynthesis; molybdopterin biosynthesis. Catalyzes the conversion of (8S)-3',8-cyclo-7,8-dihydroguanosine 5'-triphosphate to cyclic pyranopterin monophosphate (cPMP). The chain is Cyclic pyranopterin monophosphate synthase from Nostoc sp. (strain PCC 7120 / SAG 25.82 / UTEX 2576).